An 87-amino-acid chain; its full sequence is Phosphocarrier protein HPr (87 aa).

The HPr domain occupies 2–87; it reads ASKDFHIVAE…NETMTKEGLA (86 aa). Residue His-15 is the Pros-phosphohistidine intermediate of the active site. At Ser-46 the chain carries Phosphoserine; by HPrK/P.

It belongs to the HPr family.

It localises to the cytoplasm. Phosphorylation on Ser-46 inhibits the phosphoryl transfer from enzyme I to HPr. In terms of biological role, general (non sugar-specific) component of the phosphoenolpyruvate-dependent sugar phosphotransferase system (sugar PTS). This major carbohydrate active-transport system catalyzes the phosphorylation of incoming sugar substrates concomitantly with their translocation across the cell membrane. The phosphoryl group from phosphoenolpyruvate (PEP) is transferred to the phosphoryl carrier protein HPr by enzyme I. Phospho-HPr then transfers it to the PTS EIIA domain. P-Ser-HPr interacts with the catabolite control protein A (CcpA), forming a complex that binds to DNA at the catabolite response elements cre, operator sites preceding a large number of catabolite-regulated genes. Thus, P-Ser-HPr is a corepressor in carbon catabolite repression (CCR), a mechanism that allows bacteria to coordinate and optimize the utilization of available carbon sources. P-Ser-HPr also plays a role in inducer exclusion, in which it probably interacts with several non-PTS permeases and inhibits their transport activity. The chain is Phosphocarrier protein HPr (ptsH) from Streptococcus mutans serotype c (strain ATCC 700610 / UA159).